Here is a 482-residue protein sequence, read N- to C-terminus: Anthocyanin 3'-O-beta-glucosyltransferase (482 aa).

Residue His-16 is the Proton acceptor of the active site. His-16 serves as a coordination point for an anthocyanidin. The active-site Charge relay is Asp-119. UDP-alpha-D-glucose is bound by residues Ala-349, Gln-351, His-366, Trp-369, Asn-370, Ser-371, and Glu-374. An anthocyanidin is bound at residue Ala-389. 2 residues coordinate UDP-alpha-D-glucose: Glu-390 and Gln-391.

It belongs to the UDP-glycosyltransferase family. In terms of processing, the N-terminus is blocked. In terms of tissue distribution, abundant in petals and barely detected in leaves.

It carries out the reaction delphinidin 3,5-bis-O-beta-D-glucoside + UDP-alpha-D-glucose = delphinidin 3,3',5-tri-O-beta-D-glucoside + UDP + H(+). Functionally, specifically glucosylates the 3'-hydroxy group of delphinidin 3,5-di-O-glucoside to produce gentiodelphin. Shows a strict specificity for UDP-glucose as donor. The protein is Anthocyanin 3'-O-beta-glucosyltransferase of Gentiana triflora (Clustered gentian).